Consider the following 361-residue polypeptide: Probable dual-specificity RNA methyltransferase RlmN (361 aa).

Catalysis depends on Glu99, which acts as the Proton acceptor. The 238-residue stretch at 105 to 342 (GPNRMTACVS…VTIRKSYGTP (238 aa)) folds into the Radical SAM core domain. An intrachain disulfide couples Cys112 to Cys347. Residues Cys119, Cys123, and Cys126 each coordinate [4Fe-4S] cluster. S-adenosyl-L-methionine is bound by residues 171–172 (GE), Ser204, 227–229 (SLH), and Asn304. The active-site S-methylcysteine intermediate is Cys347.

This sequence belongs to the radical SAM superfamily. RlmN family. The cofactor is [4Fe-4S] cluster.

The protein localises to the cytoplasm. It carries out the reaction adenosine(2503) in 23S rRNA + 2 reduced [2Fe-2S]-[ferredoxin] + 2 S-adenosyl-L-methionine = 2-methyladenosine(2503) in 23S rRNA + 5'-deoxyadenosine + L-methionine + 2 oxidized [2Fe-2S]-[ferredoxin] + S-adenosyl-L-homocysteine. The catalysed reaction is adenosine(37) in tRNA + 2 reduced [2Fe-2S]-[ferredoxin] + 2 S-adenosyl-L-methionine = 2-methyladenosine(37) in tRNA + 5'-deoxyadenosine + L-methionine + 2 oxidized [2Fe-2S]-[ferredoxin] + S-adenosyl-L-homocysteine. Functionally, specifically methylates position 2 of adenine 2503 in 23S rRNA and position 2 of adenine 37 in tRNAs. The sequence is that of Probable dual-specificity RNA methyltransferase RlmN from Chlorobium luteolum (strain DSM 273 / BCRC 81028 / 2530) (Pelodictyon luteolum).